The following is a 66-amino-acid chain: MAKSKNSTNKNQISKSHRNGIKKPKDHRHISTKGVNPRFLRNRRRAIKNDPSIKKSKNLEKKVNKE.

The span at 1-14 (MAKSKNSTNKNQIS) shows a compositional bias: polar residues. A disordered region spans residues 1–66 (MAKSKNSTNK…KNLEKKVNKE (66 aa)). Basic residues predominate over residues 15-31 (KSHRNGIKKPKDHRHIS). Positions 47–66 (IKNDPSIKKSKNLEKKVNKE) are enriched in basic and acidic residues.

It belongs to the eukaryotic ribosomal protein eL29 family.

It is found in the cytoplasm. The chain is Large ribosomal subunit protein eL29 (RPL29) from Tetrahymena thermophila.